We begin with the raw amino-acid sequence, 101 residues long: Urease subunit beta (101 aa).

It belongs to the urease beta subunit family. In terms of assembly, heterotrimer of UreA (gamma), UreB (beta) and UreC (alpha) subunits. Three heterotrimers associate to form the active enzyme.

Its subcellular location is the cytoplasm. It catalyses the reaction urea + 2 H2O + H(+) = hydrogencarbonate + 2 NH4(+). It participates in nitrogen metabolism; urea degradation; CO(2) and NH(3) from urea (urease route): step 1/1. The chain is Urease subunit beta from Pseudomonas syringae pv. syringae (strain B728a).